The sequence spans 98 residues: Putative pterin-4-alpha-carbinolamine dehydratase (98 aa).

This sequence belongs to the pterin-4-alpha-carbinolamine dehydratase family.

It carries out the reaction (4aS,6R)-4a-hydroxy-L-erythro-5,6,7,8-tetrahydrobiopterin = (6R)-L-erythro-6,7-dihydrobiopterin + H2O. This chain is Putative pterin-4-alpha-carbinolamine dehydratase, found in Jannaschia sp. (strain CCS1).